We begin with the raw amino-acid sequence, 364 residues long: Probable transcription factor At4g00390 (364 aa).

Residues 1–149 (MTKKLDPPTA…STKRVKKDEE (149 aa)) form a disordered region. Residues 13–32 (SDEDDVETSEDDSSSSEEDE) show a composition bias toward acidic residues. Positions 39–80 (ATTAAAPAKSTAVSAATPAKSTSVSAAAPSKSTAVSAAADSD) are enriched in low complexity. Over residues 81–93 (SGSESETDSDSES) the composition is skewed to acidic residues.

It belongs to the GeBP family.

This Arabidopsis thaliana (Mouse-ear cress) protein is Probable transcription factor At4g00390.